A 1298-amino-acid polypeptide reads, in one-letter code: DNA repair protein rad-50 (1298 aa).

9 residues coordinate ATP: R13, N38, G39, G41, K42, T43, T44, I66, and Q158. Position 43 (T43) interacts with Mg(2+). Residue Q158 participates in Mg(2+) binding. Coiled-coil stretches lie at residues 222–291, 317–598, and 622–660; these read ARQN…IRVE, EERA…QYRK, and AEEV…IEES. A Zinc-hook domain is found at 622-719; that stretch reads AEEVSEKLEN…EEIIIVKAEG (98 aa). Residues C666 and C669 each coordinate Zn(2+). 2 coiled-coil regions span residues 691 to 719 and 754 to 1092; these read LSFP…KAEG and KNEK…KESI.

The protein belongs to the SMC family. RAD50 subfamily. As to quaternary structure, component of the MRN complex composed of two heterodimers rad-50 and mre-11 associated with a single nbs-1. Requires Zn(2+) as cofactor.

Its subcellular location is the nucleus. The protein localises to the chromosome. The enzyme catalyses ATP + H2O = ADP + phosphate + H(+). Component of the MRN complex, which plays a central role in double-strand break (DSB) repair, DNA recombination, maintenance of telomere integrity and meiosis. The MRN complex is involved in the repair of DNA double-strand breaks (DSBs) via homologous recombination (HR), an error-free mechanism which primarily occurs during S and G2 phases. The complex (1) mediates the end resection of damaged DNA, which generates proper single-stranded DNA, a key initial steps in HR, and is (2) required for the recruitment of other repair factors and efficient activation of ATM and ATR upon DNA damage. The MRN complex possesses single-strand endonuclease activity and double-strand-specific 3'-5' exonuclease activity, which are provided by mre-11, to initiate end resection, which is required for single-strand invasion and recombination. Within the complex, rad-50 is both required to bind DNA ends and hold them in close proximity and regulate the activity of mre-11. Rad-50 provides an ATP-dependent control of mre-11 by positioning DNA ends into the mre-11 active site: ATP-binding induces a large structural change from an open form with accessible mre-11 nuclease sites into a closed form. In Caenorhabditis elegans, this protein is DNA repair protein rad-50 (rad-50).